The chain runs to 217 residues: Large ribosomal subunit protein uL1 (217 aa).

The protein belongs to the universal ribosomal protein uL1 family. As to quaternary structure, part of the 50S ribosomal subunit.

Its function is as follows. Binds directly to 23S rRNA. Probably involved in E site tRNA release. Protein L1 is also a translational repressor protein, it controls the translation of its operon by binding to its mRNA. The protein is Large ribosomal subunit protein uL1 of Thermoplasma acidophilum (strain ATCC 25905 / DSM 1728 / JCM 9062 / NBRC 15155 / AMRC-C165).